A 540-amino-acid polypeptide reads, in one-letter code: V-set and immunoglobulin domain-containing protein 10 (540 aa).

Positions 1-30 (MAAGGSAPEPRVLVCLGALLAGWVAVGLEA) are cleaved as a signal peptide. 4 consecutive Ig-like C2-type domains span residues 31-119 (VVIG…WLQV), 123-215 (PYQI…RKVT), 223-309 (PPPS…VQIR), and 311-404 (PSLL…IWLS). Over 31–413 (VVIGEVHENV…SVKEPLNIGG (383 aa)) the chain is Extracellular. Asn-39, Asn-46, Asn-70, Asn-108, Asn-138, Asn-171, Asn-180, and Asn-198 each carry an N-linked (GlcNAc...) asparagine glycan. A disulfide bond links Cys-44 and Cys-103. 2 cysteine pairs are disulfide-bonded: Cys-153/Cys-201 and Cys-245/Cys-290. Residue Asn-326 is glycosylated (N-linked (GlcNAc...) asparagine). The cysteines at positions 331 and 388 are disulfide-linked. The chain crosses the membrane as a helical span at residues 414–434 (IVGTIVSLLLLGLAIISGLLL). The Cytoplasmic portion of the chain corresponds to 435–540 (HYSPVFCWKV…DIVQEEDRPV (106 aa)). The span at 461–477 (DSEEEEEEEEEEEEDAA) shows a compositional bias: acidic residues. 2 disordered regions span residues 461 to 500 (DSEEEEEEEEEEEEDAAVGEQEGAREREELPKEIPKQDHI) and 513 to 540 (QMGNGFQDLQDDSSEEQSDIVQEEDRPV). Residues 482 to 500 (EGAREREELPKEIPKQDHI) show a composition bias toward basic and acidic residues. The segment covering 521–534 (LQDDSSEEQSDIVQ) has biased composition (acidic residues).

The protein resides in the membrane. The chain is V-set and immunoglobulin domain-containing protein 10 (VSIG10) from Homo sapiens (Human).